Reading from the N-terminus, the 222-residue chain is PKHD-type hydroxylase P9301_13621 (222 aa).

The region spanning 81-175 (KIHGIMFTKS…RLVCVGWIES (95 aa)) is the Fe2OG dioxygenase domain. Positions 99, 101, and 156 each coordinate Fe cation. Residue arginine 166 participates in 2-oxoglutarate binding.

Fe(2+) serves as cofactor. The cofactor is L-ascorbate.

The polypeptide is PKHD-type hydroxylase P9301_13621 (Prochlorococcus marinus (strain MIT 9301)).